Here is a 127-residue protein sequence, read N- to C-terminus: Large ribosomal subunit protein uL22 (127 aa).

Belongs to the universal ribosomal protein uL22 family. In terms of assembly, part of the 50S ribosomal subunit.

Its function is as follows. This protein binds specifically to 23S rRNA; its binding is stimulated by other ribosomal proteins, e.g. L4, L17, and L20. It is important during the early stages of 50S assembly. It makes multiple contacts with different domains of the 23S rRNA in the assembled 50S subunit and ribosome. The globular domain of the protein is located near the polypeptide exit tunnel on the outside of the subunit, while an extended beta-hairpin is found that lines the wall of the exit tunnel in the center of the 70S ribosome. The protein is Large ribosomal subunit protein uL22 of Methylorubrum populi (strain ATCC BAA-705 / NCIMB 13946 / BJ001) (Methylobacterium populi).